Consider the following 450-residue polypeptide: Keratin, type I cytoskeletal 25 (450 aa).

Positions 1-24 (MSLRLPSGSRRAGPRPTTGSLRLS) are disordered. A head region spans residues 1-78 (MSLRLPSGSR…MNEGGLLSGN (78 aa)). Positions 79 to 114 (EKVTMQNLNDRLASYLENVRALEEANADLEQKIKGW) are coil 1A. An IF rod domain is found at 79-394 (EKVTMQNLND…LLIGGDDGAC (316 aa)). Residues 115-136 (YEKFGPGSCRGLDHDYSRYLPI) are linker 1. Positions 137–228 (IEDLKNQIIA…KNHKEEMQVL (92 aa)) are coil 1B. Residues 229 to 251 (QCAAGGNVNVEMNAAPGVDLTVL) form a linker 12 region. A coil 2 region spans residues 252–390 (LNNMRAEYEA…ETYCLLIGGD (139 aa)). The tail stretch occupies residues 391–450 (DGACKSGGYKSKDYAAGNMGNQMKDPIRAIVVKKVLEEVDQRSKVLTTRLHSLEEKSQSN). Phosphoserine is present on Ser-442.

It belongs to the intermediate filament family. Heterodimer of a type I and a type II keratin. Heterodimer with type II keratin KRT5 leading to the formation of keratin intermediate filament (KIF) network. Interacts with KRT6A to form filaments. In terms of tissue distribution, expressed in skin and wool follicle. Expression localized to the inner root sheath of wool follicle.

Its subcellular location is the cytoplasm. Essential for the proper assembly of type I and type II keratin protein complexes and formation of keratin intermediate filaments in the inner root sheath (irs). Plays a role in the cytoskeleton organization. The chain is Keratin, type I cytoskeletal 25 from Ovis aries (Sheep).